We begin with the raw amino-acid sequence, 67 residues long: UPF0253 protein VV2574 (67 aa).

It belongs to the UPF0253 family.

The protein is UPF0253 protein VV2574 of Vibrio vulnificus (strain YJ016).